We begin with the raw amino-acid sequence, 359 residues long: Peptide chain release factor 1 (359 aa).

Residue Gln-236 is modified to N5-methylglutamine. Residues 288–308 (QDEQDAERKSTIGTGDRSERI) form a disordered region. The segment covering 293 to 308 (AERKSTIGTGDRSERI) has biased composition (basic and acidic residues).

The protein belongs to the prokaryotic/mitochondrial release factor family. Post-translationally, methylated by PrmC. Methylation increases the termination efficiency of RF1.

It is found in the cytoplasm. Peptide chain release factor 1 directs the termination of translation in response to the peptide chain termination codons UAG and UAA. The polypeptide is Peptide chain release factor 1 (Streptococcus uberis (strain ATCC BAA-854 / 0140J)).